Consider the following 337-residue polypeptide: DNA-directed RNA polymerase subunit alpha (337 aa).

Residues 1–231 (MRNITTSAYT…KQLSVFDKIT (231 aa)) are alpha N-terminal domain (alpha-NTD). Residues 247–337 (ENTKLLQNIT…IAELKAQNEG (91 aa)) form an alpha C-terminal domain (alpha-CTD) region.

Belongs to the RNA polymerase alpha chain family. Homodimer. The RNAP catalytic core consists of 2 alpha, 1 beta, 1 beta' and 1 omega subunit. When a sigma factor is associated with the core the holoenzyme is formed, which can initiate transcription.

It catalyses the reaction RNA(n) + a ribonucleoside 5'-triphosphate = RNA(n+1) + diphosphate. Its function is as follows. DNA-dependent RNA polymerase catalyzes the transcription of DNA into RNA using the four ribonucleoside triphosphates as substrates. This chain is DNA-directed RNA polymerase subunit alpha, found in Campylobacter jejuni subsp. jejuni serotype O:2 (strain ATCC 700819 / NCTC 11168).